Here is a 592-residue protein sequence, read N- to C-terminus: Tegument protein US23 (592 aa).

A disordered region spans residues 407–491; sequence PRSLGDGEEE…NNVVPNVERR (85 aa). Acidic residues predominate over residues 460–481; the sequence is ADDEEQGEDDDDSGAEPMEPEE.

The protein belongs to the herpesviridae US22 family.

Its subcellular location is the virion tegument. The protein is Tegument protein US23 (US23) of Homo sapiens (Human).